Consider the following 93-residue polypeptide: Putative septation protein SpoVG (93 aa).

The protein belongs to the SpoVG family.

In terms of biological role, could be involved in septation. The protein is Putative septation protein SpoVG of Alkaliphilus oremlandii (strain OhILAs) (Clostridium oremlandii (strain OhILAs)).